Reading from the N-terminus, the 131-residue chain is Small ribosomal subunit protein uS12 (131 aa).

Residues 1 to 22 (MPTTQQLLRKGRKVLQKKSKVP) are disordered. Positions 9 to 20 (RKGRKVLQKKSK) are enriched in basic residues. Residue D89 is modified to 3-methylthioaspartic acid. Residues 102-131 (LDTQGVKDRNKSRSKYGTKKPKAGAAAAKK) are disordered. Residues 113–131 (SRSKYGTKKPKAGAAAAKK) are compositionally biased toward basic residues.

This sequence belongs to the universal ribosomal protein uS12 family. As to quaternary structure, part of the 30S ribosomal subunit. Contacts proteins S8 and S17. May interact with IF1 in the 30S initiation complex.

Its function is as follows. With S4 and S5 plays an important role in translational accuracy. Functionally, interacts with and stabilizes bases of the 16S rRNA that are involved in tRNA selection in the A site and with the mRNA backbone. Located at the interface of the 30S and 50S subunits, it traverses the body of the 30S subunit contacting proteins on the other side and probably holding the rRNA structure together. The combined cluster of proteins S8, S12 and S17 appears to hold together the shoulder and platform of the 30S subunit. The polypeptide is Small ribosomal subunit protein uS12 (Deinococcus radiodurans (strain ATCC 13939 / DSM 20539 / JCM 16871 / CCUG 27074 / LMG 4051 / NBRC 15346 / NCIMB 9279 / VKM B-1422 / R1)).